The chain runs to 233 residues: Large ribosomal subunit protein uL1 (233 aa).

Belongs to the universal ribosomal protein uL1 family. Part of the 50S ribosomal subunit.

Functionally, binds directly to 23S rRNA. The L1 stalk is quite mobile in the ribosome, and is involved in E site tRNA release. Its function is as follows. Protein L1 is also a translational repressor protein, it controls the translation of the L11 operon by binding to its mRNA. The protein is Large ribosomal subunit protein uL1 of Geobacillus stearothermophilus (Bacillus stearothermophilus).